A 201-amino-acid chain; its full sequence is Peptide deformylase 2 (201 aa).

Residues Cys121 and His163 each coordinate Fe cation. Residue Glu164 is part of the active site. His167 contributes to the Fe cation binding site.

It belongs to the polypeptide deformylase family. Fe(2+) serves as cofactor.

It catalyses the reaction N-terminal N-formyl-L-methionyl-[peptide] + H2O = N-terminal L-methionyl-[peptide] + formate. Removes the formyl group from the N-terminal Met of newly synthesized proteins. Requires at least a dipeptide for an efficient rate of reaction. N-terminal L-methionine is a prerequisite for activity but the enzyme has broad specificity at other positions. The sequence is that of Peptide deformylase 2 from Prochlorococcus marinus (strain MIT 9313).